The following is a 261-amino-acid chain: Rho-related GTP-binding protein RhoU (261 aa).

The interval 1 to 48 (MAPQQGRPALPARCEPPAAPPVPPRRERGGRGARGPGVSGGRGRAGGA) is disordered. Residues 7 to 16 (RPALPARCEP) show a composition bias toward low complexity. Positions 32–48 (GARGPGVSGGRGRAGGA) are enriched in gly residues. Residues 59–66 (GDGAVGKT), 106–110 (DTAGQ), and 164–167 (TQSD) contribute to the GTP site. Residues Lys-180 and Lys-251 each participate in a glycyl lysine isopeptide (Lys-Gly) (interchain with G-Cter in ubiquitin) cross-link. Cys-259 carries the S-palmitoyl cysteine lipid modification.

This sequence belongs to the small GTPase superfamily. Rho family. Interacts with PAK1. Interacts with PAK3. Interacts with ARHGAP30 in a GTP-independent manner. In its GTP-loaded conformation, interacts with ARHGAP31. Interacts with PTK2B/PYK2. Interacts with PAK4; interaction protects RHOU from ubiquitination and subsequent degradation. Mg(2+) is required as a cofactor. Tyrosine phosphorylated by SRC in response to PTK2B/PYK2 activation. Post-translationally, ubiquitinated. 'Lys-48'-linked ubiquitination at Lys-180 and Lys-251 by the ECS(RAB40A) complex leading to its degradation.

The protein localises to the cell membrane. The protein resides in the golgi apparatus membrane. Its subcellular location is the cell junction. It localises to the focal adhesion. It is found in the cell projection. The protein localises to the podosome. Binds to and activates protein kinase PAK1. Plays a role in the regulation of cell morphology, cytoskeletal organization and focal adhesion assembly during cell migration. Also stimulates quiescent cells to reenter the cell cycle. Has no detectable GTPase activity but its high intrinsic guanine nucleotide exchange activity suggests it is constitutively GTP-bound. The polypeptide is Rho-related GTP-binding protein RhoU (Mus musculus (Mouse)).